A 229-amino-acid polypeptide reads, in one-letter code: Orotidine 5'-phosphate decarboxylase (229 aa).

Substrate contacts are provided by residues Asp9, Lys31, 58–67, Thr121, Arg179, Gln188, Gly208, and Arg209; that span reads DLKLFDIPNT. Lys60 serves as the catalytic Proton donor.

It belongs to the OMP decarboxylase family. Type 1 subfamily. Homodimer.

It catalyses the reaction orotidine 5'-phosphate + H(+) = UMP + CO2. Its pathway is pyrimidine metabolism; UMP biosynthesis via de novo pathway; UMP from orotate: step 2/2. Functionally, catalyzes the decarboxylation of orotidine 5'-monophosphate (OMP) to uridine 5'-monophosphate (UMP). The polypeptide is Orotidine 5'-phosphate decarboxylase (Lawsonia intracellularis (strain PHE/MN1-00)).